A 129-amino-acid polypeptide reads, in one-letter code: uncharacterized protein (129 aa).

This is an uncharacterized protein from Homo sapiens (Human).